The following is a 535-amino-acid chain: Cytochrome c oxidase subunit 1 (535 aa).

Residues 21 to 43 (VLYFIFALFSAMIGTGLSAIIRL) form a helical membrane-spanning segment. Ca(2+) contacts are provided by Glu44 and Gly49. 6 consecutive transmembrane segments (helical) span residues 63–85 (VITA…GGFG), 106–128 (ISFW…EAGA), 153–175 (IFSL…TTFI), 188–210 (PLFA…VLAA), 242–264 (YWWN…SHAV), and 271–293 (PVFG…FCVW). His67 is a binding site for Fe(II)-heme a. His246 provides a ligand contact to Cu cation. The segment at residues 246–250 (HPEVY) is a cross-link (1'-histidyl-3'-tyrosine (His-Tyr)). Tyr250 contacts O2. 2 residues coordinate Cu cation: His295 and His296. The next 2 membrane-spanning stretches (helical) occupy residues 308-330 (AYFT…SWLA) and 342-364 (TALF…VVLA). Positions 373 and 374 each coordinate Mg(2+). A run of 3 helical transmembrane segments spans residues 379-401 (VAHF…WYLW), 414-436 (LSHI…MHFL), and 456-478 (NQVA…YVVY). His381 lines the heme a3 pocket. His383 is a Fe(II)-heme a binding site.

The protein belongs to the heme-copper respiratory oxidase family. Component of the cytochrome c oxidase (complex IV, CIV), a multisubunit enzyme composed of a catalytic core of 3 subunits and several supernumerary subunits. The complex exists as a monomer or a dimer and forms supercomplexes (SCs) in the inner mitochondrial membrane with ubiquinol-cytochrome c oxidoreductase (cytochrome b-c1 complex, complex III, CIII). Requires heme as cofactor. Cu cation is required as a cofactor.

The protein localises to the mitochondrion inner membrane. The catalysed reaction is 4 Fe(II)-[cytochrome c] + O2 + 8 H(+)(in) = 4 Fe(III)-[cytochrome c] + 2 H2O + 4 H(+)(out). The protein operates within energy metabolism; oxidative phosphorylation. In terms of biological role, component of the cytochrome c oxidase, the last enzyme in the mitochondrial electron transport chain which drives oxidative phosphorylation. The respiratory chain contains 3 multisubunit complexes succinate dehydrogenase (complex II, CII), ubiquinol-cytochrome c oxidoreductase (cytochrome b-c1 complex, complex III, CIII) and cytochrome c oxidase (complex IV, CIV), that cooperate to transfer electrons derived from NADH and succinate to molecular oxygen, creating an electrochemical gradient over the inner membrane that drives transmembrane transport and the ATP synthase. Cytochrome c oxidase is the component of the respiratory chain that catalyzes the reduction of oxygen to water. Electrons originating from reduced cytochrome c in the intermembrane space (IMS) are transferred via the dinuclear copper A center (CU(A)) of subunit 2 and heme A of subunit 1 to the active site in subunit 1, a binuclear center (BNC) formed by heme A3 and copper B (CU(B)). The BNC reduces molecular oxygen to 2 water molecules using 4 electrons from cytochrome c in the IMS and 4 protons from the mitochondrial matrix. This chain is Cytochrome c oxidase subunit 1 (COX1), found in Yarrowia lipolytica (strain CLIB 122 / E 150) (Yeast).